Here is a 272-residue protein sequence, read N- to C-terminus: MEHKKIAFIGAGNMVRAIVSGLVANGYPAQNITATAPSEARRLPLEQDFGIRTTSDNIQAATEADVVVLSVKPQMMADVCKPLQAIDFTNKLVISIAAGINCSRLDDMLATKLNLVRVMPNTPSQLGLGMSGLFAPIHVTEHDKAFAAELMEAVGKVCWVEQESGINNVIAAAGSAPAYFFLFMEAMQAEAIAQGFDKESARLLVQQAALGAASMVVSNPETELSTLRENVTSKGGTTAEALRTFNEHQLSDIVAKAMQAAVARAEEMEKLF.

It belongs to the pyrroline-5-carboxylate reductase family.

The protein localises to the cytoplasm. It catalyses the reaction L-proline + NADP(+) = (S)-1-pyrroline-5-carboxylate + NADPH + 2 H(+). It carries out the reaction L-proline + NAD(+) = (S)-1-pyrroline-5-carboxylate + NADH + 2 H(+). The protein operates within amino-acid biosynthesis; L-proline biosynthesis; L-proline from L-glutamate 5-semialdehyde: step 1/1. Its function is as follows. Catalyzes the reduction of 1-pyrroline-5-carboxylate (PCA) to L-proline. The protein is Pyrroline-5-carboxylate reductase of Vibrio alginolyticus.